The primary structure comprises 89 residues: Large ribosomal subunit protein bL27 (89 aa).

The interval 1-23 (MAHKKAGGSSRNGRDSAGKRLGI) is disordered.

It belongs to the bacterial ribosomal protein bL27 family.

This is Large ribosomal subunit protein bL27 from Rhodopseudomonas palustris (strain BisA53).